The following is a 104-amino-acid chain: Vacuolar ATPase assembly integral membrane protein VMA21 (104 aa).

Over methionine 1–alanine 21 the chain is Cytoplasmic. Residues valine 22–phenylalanine 42 form a helical membrane-spanning segment. Over serine 43–threonine 65 the chain is Lumenal. A helical transmembrane segment spans residues phenylalanine 66–alanine 86. Residues phenylalanine 87–serine 104 are Cytoplasmic-facing. The short motif at lysine 101–serine 104 is the Prevents secretion from ER element.

It belongs to the VMA21 family.

The protein resides in the endoplasmic reticulum membrane. The protein localises to the endoplasmic reticulum-Golgi intermediate compartment membrane. It is found in the cytoplasmic vesicle. Its subcellular location is the COPII-coated vesicle membrane. Required for the assembly of the V0 complex of the vacuolar ATPase (V-ATPase) in the endoplasmic reticulum. This Cryptococcus neoformans var. neoformans serotype D (strain B-3501A) (Filobasidiella neoformans) protein is Vacuolar ATPase assembly integral membrane protein VMA21.